A 189-amino-acid polypeptide reads, in one-letter code: Putative biopolymer transport protein ExbB-like 1 (189 aa).

Transmembrane regions (helical) follow at residues 14 to 34, 99 to 119, and 147 to 167; these read FVTT…LWVF, LVVL…GTVV, and LIAT…YLIL.

Belongs to the ExbB/TolQ family.

It localises to the cell inner membrane. In Helicobacter pylori (strain ATCC 700392 / 26695) (Campylobacter pylori), this protein is Putative biopolymer transport protein ExbB-like 1.